Here is a 703-residue protein sequence, read N- to C-terminus: Calpain-8 (703 aa).

Residues 45–344 (LFKDPEFPAC…FSRLEICNLS (300 aa)) form the Calpain catalytic domain. Residues C105, H262, and N286 contribute to the active site. Positions 355–512 (KWNLVLFNGR…VFSEKKAQAL (158 aa)) are domain III. The interval 513 to 531 (EIGDAVPGDPHEPHPRDMD) is linker. 4 consecutive EF-hand domains span residues 531 to 566 (DGEDEHFWSLSEEFADKDSEISAHQLKRVLNGLLSK), 575 to 610 (FNINTCREMISLLDGDGTGSLRPVEFKTLWLKICKY), 605 to 640 (LKICKYLEIYQEMDHSRAGTIDAHEMRTALKKAGFT), and 670 to 703 (IRLEILFKLFRLLDKDQNGIVQLSLAEWLCRALV). The tract at residues 532–703 (GEDEHFWSLS…LAEWLCRALV (172 aa)) is domain IV. 9 residues coordinate Ca(2+): D588, D590, T592, S594, E599, D618, S620, T624, and E629.

It belongs to the peptidase C2 family. In terms of assembly, monomer and homooligomer. Interacts with COPS1/GPS1, COPB1, EYA2, NME2, NME4 and TOMM70. Ca(2+) serves as cofactor. Undergoes autolytic cleavage between Ala-5 and Ala-6 which gives rise to fragments extending from Ala-6 to the C-terminus, Ala-6 to the EF-hand 2 domain and from Ala-6 to the beginning of domain III. In terms of tissue distribution, predominantly expressed in the stomach. Localizes strictly to the surface mucus cells in the gastric epithelium and the mucus-secreting goblet cells in the duodenum.

Its subcellular location is the cytoplasm. It is found in the golgi apparatus. The enzyme catalyses Broad endopeptidase specificity.. The concentration of calcium for half-maximal activity is 0.3 mM. Inhibited by calpastatin and calpeptin. In terms of biological role, calcium-regulated non-lysosomal thiol-protease. Involved in membrane trafficking in the gastric surface mucus cells (pit cells) and may involve the membrane trafficking of mucus cells via interactions with coat protein. Proteolytically cleaves the beta-subunit of coatomer complex. The protein is Calpain-8 (Capn8) of Mus musculus (Mouse).